A 571-amino-acid polypeptide reads, in one-letter code: uncharacterized protein (571 aa).

Disordered regions lie at residues 71–128 (TNHY…RVTA), 142–258 (NKND…PQNE), and 298–336 (LNRQPETRRNCQCPEKQQTPPPEETQNAQENDDQQTTKR). Residues 88–113 (PNRSGVSSPVNDGASSPTQRGGTTPA) show a composition bias toward polar residues. Residues 168-184 (RGYPGPGPRGYPGPGPR) are compositionally biased toward pro residues. Residues 205–215 (QGPRRYSCPGP) are compositionally biased toward low complexity. Residues 217-234 (GYPGPGSSGRPDPGGGLQ) are compositionally biased toward gly residues. The segment covering 311-326 (PEKQQTPPPEETQNAQ) has biased composition (low complexity).

This is an uncharacterized protein from Drosophila melanogaster (Fruit fly).